The primary structure comprises 320 residues: Mitochondrial glutamate carrier 2 (320 aa).

Solcar repeat units lie at residues 11–97 (LSIT…LRQL), 105–215 (RNLK…LNQL), and 224–313 (ASFT…GIGE). Helical transmembrane passes span 17–37 (LING…IDLA), 66–86 (FLGM…EKAI), and 111–131 (MLAG…MEML). S150 is subject to Phosphoserine. A run of 3 helical transmembrane segments spans residues 190-210 (GLGA…PLFA), 230-250 (FVAG…LDVL), and 293-313 (ALVI…GIGE).

Belongs to the mitochondrial carrier (TC 2.A.29) family.

It localises to the mitochondrion inner membrane. The enzyme catalyses L-glutamate(in) + H(+)(in) = L-glutamate(out) + H(+)(out). Its function is as follows. Responsible for the transport of glutamate from the cytosol into the mitochondrial matrix with the concomitant import of a proton (symport system). The polypeptide is Mitochondrial glutamate carrier 2 (Slc25a18) (Rattus norvegicus (Rat)).